Reading from the N-terminus, the 64-residue chain is Small cysteine-rich protein (64 aa).

The N-terminal stretch at 1–17 (FVCVQARQIDPEQILRT) is a signal peptide. A propeptide spanning residues 18–19 (PE) is cleaved from the precursor.

Post-translationally, contains 4 disulfide bonds.

Its subcellular location is the secreted. The protein localises to the nematocyst. The chain is Small cysteine-rich protein from Anemonia viridis (Snakelocks anemone).